We begin with the raw amino-acid sequence, 253 residues long: 2-C-methyl-D-erythritol 4-phosphate cytidylyltransferase (253 aa).

Belongs to the IspD/TarI cytidylyltransferase family. IspD subfamily.

The catalysed reaction is 2-C-methyl-D-erythritol 4-phosphate + CTP + H(+) = 4-CDP-2-C-methyl-D-erythritol + diphosphate. It functions in the pathway isoprenoid biosynthesis; isopentenyl diphosphate biosynthesis via DXP pathway; isopentenyl diphosphate from 1-deoxy-D-xylulose 5-phosphate: step 2/6. Catalyzes the formation of 4-diphosphocytidyl-2-C-methyl-D-erythritol from CTP and 2-C-methyl-D-erythritol 4-phosphate (MEP). The sequence is that of 2-C-methyl-D-erythritol 4-phosphate cytidylyltransferase from Idiomarina loihiensis (strain ATCC BAA-735 / DSM 15497 / L2-TR).